The chain runs to 284 residues: RNase adapter protein RapZ (284 aa).

Residue 8-15 (GRSGSGKS) participates in ATP binding. Residue 56 to 59 (DVRN) participates in GTP binding. Residues 266-284 (RSRGKNVQSRHRTLEKRKS) form an RNA-binding region.

The protein belongs to the RapZ-like family. RapZ subfamily. Homotrimer.

In terms of biological role, modulates the synthesis of GlmS, by affecting the processing and stability of the regulatory small RNA GlmZ. When glucosamine-6-phosphate (GlcN6P) concentrations are high in the cell, RapZ binds GlmZ and targets it to cleavage by RNase E. Consequently, GlmZ is inactivated and unable to activate GlmS synthesis. Under low GlcN6P concentrations, RapZ is sequestered and inactivated by an other regulatory small RNA, GlmY, preventing GlmZ degradation and leading to synthesis of GlmS. This is RNase adapter protein RapZ from Klebsiella oxytoca.